A 104-amino-acid polypeptide reads, in one-letter code: Protein SMALL AUXIN UP-REGULATED RNA 9 (104 aa).

The protein belongs to the ARG7 family. In terms of assembly, interacts with and inhibits PP2C-D subfamily of type 2C phosphatases such as PP2C67/PP2C-D1. Expressed in etiolated hypocotyls, petioles, leaves and flowers.

The protein localises to the cell membrane. Functionally, provide a mechanistic link between auxin and plasma membrane H(+)-ATPases (PM H(+)-ATPases, e.g. AHA1 and AHA2), and triggers PM H(+)-ATPases activity by promoting phosphorylation of their C-terminal autoinhibitory domain as a result of PP2C-D subfamily of type 2C phosphatases inhibition, thus leading to the acidification of the apoplast and the facilitation of solutes and water uptake to drive cell expansion. Triggers plant growth probably by promoting cell elongation. Regulates branch angles and bending. Probably involved in light intensity mediated root development. The polypeptide is Protein SMALL AUXIN UP-REGULATED RNA 9 (Arabidopsis thaliana (Mouse-ear cress)).